We begin with the raw amino-acid sequence, 477 residues long: Argininosuccinate lyase (477 aa).

This sequence belongs to the lyase 1 family. Argininosuccinate lyase subfamily.

The protein localises to the cytoplasm. The enzyme catalyses 2-(N(omega)-L-arginino)succinate = fumarate + L-arginine. Its pathway is amino-acid biosynthesis; L-arginine biosynthesis; L-arginine from L-ornithine and carbamoyl phosphate: step 3/3. The chain is Argininosuccinate lyase from Streptomyces avermitilis (strain ATCC 31267 / DSM 46492 / JCM 5070 / NBRC 14893 / NCIMB 12804 / NRRL 8165 / MA-4680).